A 238-amino-acid polypeptide reads, in one-letter code: Uridylate kinase (238 aa).

Position 12 to 15 (12 to 15 (KLSG)) interacts with ATP. Residue Gly54 participates in UMP binding. Gly55 and Arg59 together coordinate ATP. Residues Asp74 and 135 to 142 (TGNPFFTT) contribute to the UMP site. Residues Thr162, Tyr168, and Asp171 each coordinate ATP.

It belongs to the UMP kinase family. In terms of assembly, homohexamer.

The protein resides in the cytoplasm. It carries out the reaction UMP + ATP = UDP + ADP. It functions in the pathway pyrimidine metabolism; CTP biosynthesis via de novo pathway; UDP from UMP (UMPK route): step 1/1. With respect to regulation, inhibited by UTP. Catalyzes the reversible phosphorylation of UMP to UDP. This is Uridylate kinase from Bordetella parapertussis (strain 12822 / ATCC BAA-587 / NCTC 13253).